Consider the following 238-residue polypeptide: NADH-quinone oxidoreductase subunit I (238 aa).

2 4Fe-4S ferredoxin-type domains span residues 81–111 (LVPR…IEAG) and 123–152 (VKFV…MDSG). Cys91, Cys94, Cys97, Cys101, Cys132, Cys135, Cys138, and Cys142 together coordinate [4Fe-4S] cluster.

Belongs to the complex I 23 kDa subunit family. As to quaternary structure, NDH-1 is composed of 14 different subunits. Subunits NuoA, H, J, K, L, M, N constitute the membrane sector of the complex. The cofactor is [4Fe-4S] cluster.

Its subcellular location is the cell inner membrane. The catalysed reaction is a quinone + NADH + 5 H(+)(in) = a quinol + NAD(+) + 4 H(+)(out). In terms of biological role, NDH-1 shuttles electrons from NADH, via FMN and iron-sulfur (Fe-S) centers, to quinones in the respiratory chain. The immediate electron acceptor for the enzyme in this species is believed to be ubiquinone. Couples the redox reaction to proton translocation (for every two electrons transferred, four hydrogen ions are translocated across the cytoplasmic membrane), and thus conserves the redox energy in a proton gradient. In Anaeromyxobacter sp. (strain Fw109-5), this protein is NADH-quinone oxidoreductase subunit I.